Consider the following 748-residue polypeptide: Methylmalonyl-CoA mutase, mitochondrial (748 aa).

The N-terminal 30 residues, 1–30, are a transit peptide targeting the mitochondrion; that stretch reads MLRAKNQLFLLSPHYLKQLNIPSASRWKRL. Position 48 (Gln-48) interacts with malonyl-CoA. At Lys-87 the chain carries N6-acetyllysine. Residues 94–97 and 104–108 contribute to the malonyl-CoA site; these read YPTM and TIRQY. At Lys-210 the chain carries N6-acetyllysine. Residues 214-216, Arg-226, Lys-253, His-263, and 302-304 each bind malonyl-CoA; these read TIQ and RLS. An N6-acetyllysine modification is found at Lys-333. Lys-341 carries the post-translational modification N6-succinyllysine. At Ser-479 the chain carries Phosphoserine. Lys-593 is modified (N6-succinyllysine). Lys-600 is subject to N6-acetyllysine. Residues 612-744 enclose the B12-binding domain; sequence RPRLLVAKMG…DDIEKCLAEK (133 aa). Residue His-625 participates in adenosylcob(III)alamin binding.

This sequence belongs to the methylmalonyl-CoA mutase family. As to quaternary structure, homodimer. Interacts (the apoenzyme form) with MMAA; the interaction is GTP dependent. Adenosylcob(III)alamin is required as a cofactor.

The protein localises to the mitochondrion matrix. It is found in the mitochondrion. Its subcellular location is the cytoplasm. The catalysed reaction is (R)-methylmalonyl-CoA = succinyl-CoA. Inhibited by itaconyl-CoA, a metabolite that inactivates the coenzyme B12 cofactor. Functionally, catalyzes the reversible isomerization of methylmalonyl-CoA (MMCoA) (generated from branched-chain amino acid metabolism and degradation of dietary odd chain fatty acids and cholesterol) to succinyl-CoA (3-carboxypropionyl-CoA), a key intermediate of the tricarboxylic acid cycle. The polypeptide is Methylmalonyl-CoA mutase, mitochondrial (Mmut) (Mus musculus (Mouse)).